A 252-amino-acid chain; its full sequence is DNA-directed RNA polymerase III subunit rpc8 (252 aa).

The tract at residues 214–252 is disordered; it reads WTNQSAGDDDENEEDGGENQDDEVAEDDGGEEPTIEEDE. Residues 220–252 show a composition bias toward acidic residues; it reads GDDDENEEDGGENQDDEVAEDDGGEEPTIEEDE.

The protein belongs to the eukaryotic RPB7/RPC8 RNA polymerase subunit family. In terms of assembly, component of the RNA polymerase III (Pol III) complex consisting of several subunits.

Its subcellular location is the nucleus. DNA-dependent RNA polymerase catalyzes the transcription of DNA into RNA using the four ribonucleoside triphosphates as substrates. The polypeptide is DNA-directed RNA polymerase III subunit rpc8 (polr3h-1) (Dictyostelium discoideum (Social amoeba)).